Consider the following 173-residue polypeptide: RNA pyrophosphohydrolase (173 aa).

A Nudix hydrolase domain is found at 11–164; it reads PYRRSVGILV…KKHVYMKIVN (154 aa). A Nudix box motif is present at residues 52–73; it reads GGIDENEEPLDAARRELYEETG.

The protein belongs to the Nudix hydrolase family. RppH subfamily. A divalent metal cation is required as a cofactor.

Its function is as follows. Accelerates the degradation of transcripts by removing pyrophosphate from the 5'-end of triphosphorylated RNA, leading to a more labile monophosphorylated state that can stimulate subsequent ribonuclease cleavage. The chain is RNA pyrophosphohydrolase from Bartonella henselae (strain ATCC 49882 / DSM 28221 / CCUG 30454 / Houston 1) (Rochalimaea henselae).